Reading from the N-terminus, the 505-residue chain is Cytochrome P450 4Z1 (505 aa).

Residues 1–9 (MEPSWLQEL) are Cytoplasmic-facing. The chain crosses the membrane as a helical; Signal-anchor for type II membrane protein span at residues 10-30 (MAHPFLLLILLCMSLLLFQVI). Topologically, residues 31 to 505 (RLYQRRRWMI…GIHVFAKKVC (475 aa)) are lumenal. Cys452 serves as a coordination point for heme.

The protein belongs to the cytochrome P450 family. Requires heme as cofactor. As to expression, preferentially detected in breast carcinoma tissue and mammary gland, whereas only marginal expression is found in all other tested tissues.

It localises to the endoplasmic reticulum membrane. The protein localises to the microsome membrane. The enzyme catalyses an organic molecule + reduced [NADPH--hemoprotein reductase] + O2 = an alcohol + oxidized [NADPH--hemoprotein reductase] + H2O + H(+). The catalysed reaction is dodecanoate + reduced [NADPH--hemoprotein reductase] + O2 = 7-hydroxydodecanoate + oxidized [NADPH--hemoprotein reductase] + H2O + H(+). It catalyses the reaction dodecanoate + reduced [NADPH--hemoprotein reductase] + O2 = 8-hydroxydodecanoate + oxidized [NADPH--hemoprotein reductase] + H2O + H(+). It carries out the reaction dodecanoate + reduced [NADPH--hemoprotein reductase] + O2 = 9-hydroxydodecanoate + oxidized [NADPH--hemoprotein reductase] + H2O + H(+). The enzyme catalyses dodecanoate + reduced [NADPH--hemoprotein reductase] + O2 = 10-hydroxydodecanoate + oxidized [NADPH--hemoprotein reductase] + H2O + H(+). The catalysed reaction is dodecanoate + reduced [NADPH--hemoprotein reductase] + O2 = 11-hydroxydodecanoate + oxidized [NADPH--hemoprotein reductase] + H2O + H(+). It catalyses the reaction tetradecanoate + reduced [NADPH--hemoprotein reductase] + O2 = 9-hydroxytetradecanoate + oxidized [NADPH--hemoprotein reductase] + H2O + H(+). It carries out the reaction tetradecanoate + reduced [NADPH--hemoprotein reductase] + O2 = 10-hydroxytetradecanoate + oxidized [NADPH--hemoprotein reductase] + H2O + H(+). The enzyme catalyses tetradecanoate + reduced [NADPH--hemoprotein reductase] + O2 = 11-hydroxytetradecanoate + oxidized [NADPH--hemoprotein reductase] + H2O + H(+). The catalysed reaction is tetradecanoate + reduced [NADPH--hemoprotein reductase] + O2 = 12-hydroxytetradecanoate + oxidized [NADPH--hemoprotein reductase] + H2O + H(+). It catalyses the reaction (5Z,8Z,11Z,14Z)-eicosatetraenoate + reduced [NADPH--hemoprotein reductase] + O2 = (14S,15R)-epoxy-(5Z,8Z,11Z)-eicosatrienoate + oxidized [NADPH--hemoprotein reductase] + H2O + H(+). A cytochrome P450 monooxygenase that catalyzes the in-chain oxidation of fatty acids. Catalyzes the hydroxylation of carbon-hydrogen bonds. Hydroxylates lauric and myristic acids predominantly at the omega-4 and omega-2 positions, respectively. Catalyzes the epoxidation of double bonds of polyunsaturated fatty acids (PUFA). Displays an absolute stereoselectivity in the epoxidation of arachidonic acid producing the 14(S),15(R)-epoxyeicosatrienoic acid (EET) enantiomer. Mechanistically, uses molecular oxygen inserting one oxygen atom into a substrate, and reducing the second into a water molecule, with two electrons provided by NADPH via cytochrome P450 reductase (CPR; NADPH-ferrihemoprotein reductase). This chain is Cytochrome P450 4Z1, found in Homo sapiens (Human).